The primary structure comprises 731 residues: Pre-B-cell leukemia transcription factor-interacting protein 1 (731 aa).

Residues 1–10 (MASCPDSDNS) are compositionally biased toward polar residues. Residues 1–155 (MASCPDSDNS…SSSDDDTDVD (155 aa)) form a disordered region. Ser43 carries the post-translational modification Phosphoserine. 2 stretches are compositionally biased toward polar residues: residues 62 to 75 (LFQTESPQSGSILT) and 121 to 132 (LEGQSPPQSLPS). Residues Ser129, Ser146, Ser147, and Ser148 each carry the phosphoserine modification. The residue at position 152 (Thr152) is a Phosphothreonine. Positions 270–348 (LLLDKLAKEN…QGLEADCVRG (79 aa)) form a coiled coil. Disordered stretches follow at residues 354 to 377 (LSGGRGPQGDKAIREQGPREQEPE), 447 to 572 (GQDP…DPLP), and 698 to 731 (LKKRSGKKDKHSQSPRAAGPREGHSHSHHHHHRG). Residues 364-375 (KAIREQGPREQE) show a composition bias toward basic and acidic residues. The stretch at 377–417 (ELSFLKQKEQLEAEAQALRQELERQRRLLGSVQQDLERSLQ) forms a coiled coil. Composition is skewed to basic and acidic residues over residues 472 to 499 (WSGKEKWWDGQRDRKAEHWKHKKEESGR), 508 to 543 (QEDREPAGRWKEGRPRVEESGSKKEGKRQGPKEPPR), and 551 to 569 (SGEKQKQPRWREGTKDSHD). The Nuclear localization signal signature appears at 485–505 (RKAEHWKHKKEESGRERKKNW). A Phosphoserine modification is found at Ser567. Residues 695–720 (DKALKKRSGKKDKHSQSPRAAGPREG) carry the Nuclear localization signal motif. The span at 698-707 (LKKRSGKKDK) shows a compositional bias: basic residues.

As to quaternary structure, interacts with TEX11. Interacts with ESR1, PBX1, PBX2 and PBX3. Expressed in early hematopoietic precursors.

Its subcellular location is the cytoplasm. It localises to the cytoskeleton. The protein resides in the nucleus. Functionally, regulator of pre-B-cell leukemia transcription factors (BPXs) function. Inhibits the binding of PBX1-HOX complex to DNA and blocks the transcriptional activity of E2A-PBX1. Tethers estrogen receptor-alpha (ESR1) to microtubules and allows them to influence estrogen receptors-alpha signaling. In Homo sapiens (Human), this protein is Pre-B-cell leukemia transcription factor-interacting protein 1 (PBXIP1).